Reading from the N-terminus, the 1082-residue chain is Sodium/potassium exporting P-type ATPase 2 (1082 aa).

At 1–75 the chain is on the cytoplasmic side; that stretch reads MSSINTNVAE…GANTLGDGDK (75 aa). The chain crosses the membrane as a helical span at residues 76–96; sequence ISLTKIIAHQVCNAMILVLII. At 97–98 the chain is on the extracellular side; it reads SM. The chain crosses the membrane as a helical span at residues 99-119; that stretch reads VIALAIKDWISGGVIGFVVLI. The Cytoplasmic segment spans residues 120-308; sequence NISVGFVQEY…VGTPLQRKLS (189 aa). Residues 309–329 form a helical membrane-spanning segment; it reads WLAIFLFWGCRYFCNYCNGIP. The Extracellular portion of the chain corresponds to 330 to 336; that stretch reads KNRVNKE. Residues 337-357 form a helical membrane-spanning segment; sequence VAIYAICVALSMIPSALIVVL. The Cytoplasmic portion of the chain corresponds to 358-807; that stretch reads TITMAVGAQV…RMSSNIQKFV (450 aa). Asp393 functions as the 4-aspartylphosphate intermediate in the catalytic mechanism. Mg(2+)-binding residues include Asp393 and Thr395. The ATP site is built by Thr395, Glu499, Lys552, Arg604, Thr664, Gly665, Asp666, Arg723, and Lys729. Residue Asp748 participates in Mg(2+) binding. Asn751 provides a ligand contact to ATP. A helical membrane pass occupies residues 808 to 828; sequence LQLLAENVAQALYLMVGLAFI. Topologically, residues 829-832 are extracellular; it reads DDSG. Residues 833-853 traverse the membrane as a helical segment; the sequence is LSVFPLSPVEVLWILVVTSCF. Topologically, residues 854-884 are cytoplasmic; that stretch reads PAMDLGQERASDDILEESPNSTIFTWEVIID. A helical transmembrane segment spans residues 885–905; that stretch reads MIVYGFWMAVCCLVCFVIIVY. Residues 906 to 935 lie on the Extracellular side of the membrane; the sequence is GEGDPYLGVNCNKSSSSNSDVCELVFRGRS. The chain crosses the membrane as a helical span at residues 936-956; the sequence is ASFATMTWCALILAWECIHPY. Topologically, residues 957 to 983 are cytoplasmic; the sequence is NSLFYMRQDTDHPWWKQTVIDLWDNQF. The helical transmembrane segment at 984–1004 threads the bilayer; that stretch reads LFWSVAIGFISVFPVVYIPVI. The Extracellular portion of the chain corresponds to 1005–1007; that stretch reads NTK. Residues 1008 to 1028 traverse the membrane as a helical segment; it reads VFLHGPIGYEWGLAVGFSILF. Residues 1029–1082 are Cytoplasmic-facing; it reads LAGSELWKWIKRIHKRKANKKAKNPEYELERSDPFKKYASFSRSNTMDRPELMV.

This sequence belongs to the cation transport ATPase (P-type) (TC 3.A.3) family. Type IID subfamily. It depends on Mg(2+) as a cofactor. The active site is phosphorylated in presence of sodium or potassium and in conditions of higher pH. Not phosphorylated in presence of calcium ions.

It localises to the cell membrane. It catalyses the reaction Na(+)(in) + ATP + H2O = Na(+)(out) + ADP + phosphate + H(+). The enzyme catalyses K(+)(in) + ATP + H2O = K(+)(out) + ADP + phosphate + H(+). Its function is as follows. Catalyzes the hydrolysis of ATP coupled with the export of sodium and potassium from the cell. May be an inefficient sodium exporter. May transport other cations such as lithium. Sodium/potassium efflux ATPases are involved in salt tolerance and maintaining the membrane potential across the plasma membrane in high salinity (Na+) or alkaline (K+) environments. This is Sodium/potassium exporting P-type ATPase 2 from Schwanniomyces occidentalis (Yeast).